The following is a 368-amino-acid chain: MRIVLDASGGDHAPQATVAGAIAAARTWGDQIILVGDEASIRAELAKHDTSNLDLPVVNAPEMIEMTEHPAQAIRRKRNSSVAIGLRLVRDGEADAFVSAGHSGATMAGALFILGRIRGIERPCLVTHFPTVHGHALLLDSGATTDCKPEYLVQFAQMGNVYAQKIVNIAMPRIGLLANGEEANKGDKLVQDTHVLLQQRSDLTFIGNVEPKDMLINGSADVVVADGFVGNLVLKFGEGVFKMITTAASNNIKAEWRKNLVLGLLPALVALTLPGKGRWRALIAGLTGLTLPASMAVAPLLALRKRMDYRSHGGAPLLGVNGIAIVAHGKSDALAIQNAIGQARNAVEQRVVATISHALETVELVPSA.

It belongs to the PlsX family. As to quaternary structure, homodimer. Probably interacts with PlsY.

The protein localises to the cytoplasm. It carries out the reaction a fatty acyl-[ACP] + phosphate = an acyl phosphate + holo-[ACP]. The protein operates within lipid metabolism; phospholipid metabolism. Catalyzes the reversible formation of acyl-phosphate (acyl-PO(4)) from acyl-[acyl-carrier-protein] (acyl-ACP). This enzyme utilizes acyl-ACP as fatty acyl donor, but not acyl-CoA. The sequence is that of Phosphate acyltransferase from Herpetosiphon aurantiacus (strain ATCC 23779 / DSM 785 / 114-95).